The primary structure comprises 306 residues: D-alanine--D-alanine ligase (306 aa).

Residues Glu-18 and Ser-150 contribute to the active site. Positions 104–303 (KMLWKAFGLP…FEQLVVKILE (200 aa)) constitute an ATP-grasp domain. 134–189 (VAKLGLPLMVKPSLEGSSVGLTKVKAVEELKSAVEYALKFDNTILIEEWLAGDELT) is an ATP binding site. Residues Asp-257, Glu-270, and Asn-272 each coordinate Mg(2+). Residue Ser-281 is part of the active site.

It belongs to the D-alanine--D-alanine ligase family. The cofactor is Mg(2+). Mn(2+) serves as cofactor.

Its subcellular location is the cytoplasm. The catalysed reaction is 2 D-alanine + ATP = D-alanyl-D-alanine + ADP + phosphate + H(+). Its pathway is cell wall biogenesis; peptidoglycan biosynthesis. Functionally, cell wall formation. This Haemophilus influenzae (strain ATCC 51907 / DSM 11121 / KW20 / Rd) protein is D-alanine--D-alanine ligase.